The primary structure comprises 154 residues: Transcriptional repressor NrdR (154 aa).

The segment at 3 to 34 (CPTCQYNGTRVVDSRPADDGNSIRRRRECEKC) is a zinc-finger region. The ATP-cone domain maps to 49 to 139 (LIVVKKDGAR…VYRQFKDISV (91 aa)).

Belongs to the NrdR family. It depends on Zn(2+) as a cofactor.

In terms of biological role, negatively regulates transcription of bacterial ribonucleotide reductase nrd genes and operons by binding to NrdR-boxes. The chain is Transcriptional repressor NrdR from Listeria monocytogenes serotype 4a (strain HCC23).